Reading from the N-terminus, the 584-residue chain is MKRSGYCGDIRESSIGKEIAVCGWVHSRRDHGGVIFIDLRDREGILQIVFQPENKEIFEAAEKLRSEYVIAVKGWVRNRPFGTLNTNMSTGNVELVAVELKILNTSPGLPFEISDYIDTSEELRLKYRYLDLRRPNLQKNFVMRHKISKEIRNFLNEEGFLEIETPFLTKSTPEGARDFLVPSRLHHGNFFALPQSPQLFKQILMSAGFDKYYQIVRCFRDEDLRADRQPEFTQVDVEMSFVDEEDVMVVIERMLARVFKMTLNLDIKMPFERMPYSEAMLRFGSDKPDTRFEVEIKDFSRELKNSGFSVFSSVISKGGIVRGLCIPKGASFSRSEIAGLTKFVGEYGAKGLVWMKITDTGADSNIVKYFKEYEIRVFISKLNAKSGDLIVFLADEEKTVAQGLGALRLKVGRESGLIDKNKFNFLWVVDFPLMEWDKEEQRWQALHHPFTLPKDADSLTKENAGRAKAKAYDVVLNGIELGGGSIRIHKSGIQKKIFNILDISDESAEKKFGFLLKALTYGAPPHGGAALGFDRLCALISGEDSIREVIAFPKTQKAVDPLSNAPAAVSDNHLKELGLQQIEN.

E174 contributes to the L-aspartate binding site. Residues 198–201 (QLFK) are aspartate. Position 220 (R220) interacts with L-aspartate. ATP-binding positions include 220-222 (RDE) and Q229. H447 is an L-aspartate binding site. E480 serves as a coordination point for ATP. R487 provides a ligand contact to L-aspartate. Residue 532–535 (GFDR) participates in ATP binding.

This sequence belongs to the class-II aminoacyl-tRNA synthetase family. Type 1 subfamily. As to quaternary structure, homodimer.

It localises to the cytoplasm. It catalyses the reaction tRNA(Asx) + L-aspartate + ATP = L-aspartyl-tRNA(Asx) + AMP + diphosphate. Functionally, aspartyl-tRNA synthetase with relaxed tRNA specificity since it is able to aspartylate not only its cognate tRNA(Asp) but also tRNA(Asn). Reaction proceeds in two steps: L-aspartate is first activated by ATP to form Asp-AMP and then transferred to the acceptor end of tRNA(Asp/Asn). The polypeptide is Aspartate--tRNA(Asp/Asn) ligase (Endomicrobium trichonymphae).